A 120-amino-acid chain; its full sequence is Large ribosomal subunit protein bL19 (120 aa).

The protein belongs to the bacterial ribosomal protein bL19 family.

This protein is located at the 30S-50S ribosomal subunit interface and may play a role in the structure and function of the aminoacyl-tRNA binding site. The protein is Large ribosomal subunit protein bL19 of Acaryochloris marina (strain MBIC 11017).